The primary structure comprises 162 residues: Nucleotide-binding protein CHU_2278 (162 aa).

Belongs to the YajQ family.

Functionally, nucleotide-binding protein. This is Nucleotide-binding protein CHU_2278 from Cytophaga hutchinsonii (strain ATCC 33406 / DSM 1761 / CIP 103989 / NBRC 15051 / NCIMB 9469 / D465).